Consider the following 85-residue polypeptide: ATP synthase subunit c (85 aa).

The next 2 membrane-spanning stretches (helical) occupy residues 10-30 (IAVS…FGIL) and 53-73 (FIVA…ALLF).

It belongs to the ATPase C chain family. As to quaternary structure, F-type ATPases have 2 components, F(1) - the catalytic core - and F(0) - the membrane proton channel. F(1) has five subunits: alpha(3), beta(3), gamma(1), delta(1), epsilon(1). F(0) has three main subunits: a(1), b(2) and c(10-14). The alpha and beta chains form an alternating ring which encloses part of the gamma chain. F(1) is attached to F(0) by a central stalk formed by the gamma and epsilon chains, while a peripheral stalk is formed by the delta and b chains.

Its subcellular location is the cell inner membrane. In terms of biological role, f(1)F(0) ATP synthase produces ATP from ADP in the presence of a proton or sodium gradient. F-type ATPases consist of two structural domains, F(1) containing the extramembraneous catalytic core and F(0) containing the membrane proton channel, linked together by a central stalk and a peripheral stalk. During catalysis, ATP synthesis in the catalytic domain of F(1) is coupled via a rotary mechanism of the central stalk subunits to proton translocation. Key component of the F(0) channel; it plays a direct role in translocation across the membrane. A homomeric c-ring of between 10-14 subunits forms the central stalk rotor element with the F(1) delta and epsilon subunits. This chain is ATP synthase subunit c, found in Idiomarina loihiensis (strain ATCC BAA-735 / DSM 15497 / L2-TR).